Reading from the N-terminus, the 127-residue chain is Large ribosomal subunit protein bL17 (127 aa).

The protein belongs to the bacterial ribosomal protein bL17 family. As to quaternary structure, part of the 50S ribosomal subunit. Contacts protein L32.

The chain is Large ribosomal subunit protein bL17 from Lactobacillus delbrueckii subsp. bulgaricus (strain ATCC 11842 / DSM 20081 / BCRC 10696 / JCM 1002 / NBRC 13953 / NCIMB 11778 / NCTC 12712 / WDCM 00102 / Lb 14).